A 1283-amino-acid polypeptide reads, in one-letter code: Bifunctional dioxygenase (DOX)-epoxy alcohol synthase (EAS) (1283 aa).

The tract at residues 1–64 is disordered; sequence MAEHKNGVAT…LPKEMGDGSY (64 aa). The interval 130–476 is fatty acid alpha-dioxygenase; that stretch reads TNSFISQLWN…DGKFNDDELV (347 aa). His227 contacts heme b. Tyr405 is a catalytic residue. His408 is a binding site for heme b. Residues 684 to 1108 are epoxy alcohol synthase; that stretch reads INIIGYNAAK…WDDGCGTDLF (425 aa). Heme is bound at residue Cys1035.

In the N-terminal section; belongs to the peroxidase family. It in the C-terminal section; belongs to the cytochrome P450 family. Homotetramer. The cofactor is heme b. Heme serves as cofactor.

It catalyses the reaction (9Z,12Z)-octadecadienoate + O2 = (8E,10R,12Z)-10-hydroperoxyoctadeca-8,12-dienoate. It carries out the reaction (8E,10R,12Z)-10-hydroperoxyoctadeca-8,12-dienoate = (12S,13R)-epoxy-(10R)-hydroxy-(8E)-octadecenoate. The catalysed reaction is (9Z)-octadecenoate + O2 = (8R)-hydroperoxy-(9Z)-octadecenoate. Bifunctional dioxygenase (DOX)-epoxy alcohol synthase (EAS) that converts linoleic acid (18:2n-6) sequentially to 10(R)-hydroperoxy-8(E),12(Z)-octadecadienoic acid (10R-HPODE) and 10R-HPODE further to 12(13)-epoxy-10-hydroxy-8(E)-octa-decenoic acid as the end product. Linoleic acid is oxidized mainly to the R stereoisomer of 10-HPODE. The dioxygenase domain is also able to oygenate position C-8 of linoleic acid to produce 8(R)-hydroperoxy-8(E),12(Z)-octadecadienoic acid (8R-HPODE). This Fusarium oxysporum (strain Fo5176) (Fusarium vascular wilt) protein is Bifunctional dioxygenase (DOX)-epoxy alcohol synthase (EAS).